The sequence spans 421 residues: ATP-dependent RNA helicase RhlB (421 aa).

The Q motif motif lies at Gln-9–Ala-37. Residues Leu-40–Ile-219 form the Helicase ATP-binding domain. Ala-53–Thr-60 is a binding site for ATP. The DEAD box motif lies at Asp-165–Asp-168. Residues Arg-245–Met-390 form the Helicase C-terminal domain. Residues Asp-392–Gly-421 form a disordered region. The span at Pro-402–Pro-414 shows a compositional bias: low complexity.

The protein belongs to the DEAD box helicase family. RhlB subfamily. In terms of assembly, component of the RNA degradosome, which is a multiprotein complex involved in RNA processing and mRNA degradation.

Its subcellular location is the cytoplasm. It carries out the reaction ATP + H2O = ADP + phosphate + H(+). Its function is as follows. DEAD-box RNA helicase involved in RNA degradation. Has RNA-dependent ATPase activity and unwinds double-stranded RNA. This Escherichia coli O7:K1 (strain IAI39 / ExPEC) protein is ATP-dependent RNA helicase RhlB.